The primary structure comprises 154 residues: UPF0225 protein SG1365 (154 aa).

The protein belongs to the UPF0225 family.

This Sodalis glossinidius (strain morsitans) protein is UPF0225 protein SG1365.